The primary structure comprises 482 residues: Uric acid transporter UacT (482 aa).

At 1–29 the chain is on the cytoplasmic side; it reads MSAIDSQLPSSSGQDRPTDEVDRILSPGK. Residues 30-50 traverse the membrane as a helical segment; sequence LIILGLQHVLVMYAGAVAVPL. Residues 51–62 are Periplasmic-facing; it reads MIGDRLGLSKEA. Residues 63 to 83 traverse the membrane as a helical segment; the sequence is IAMLISSDLFCCGIVTLLQCI. The Cytoplasmic segment spans residues 84 to 92; sequence GIGRFMGIR. The helical transmembrane segment at 93-113 threads the bilayer; the sequence is LPVIMSVTFAAVTPMIAIGMN. The Periplasmic portion of the chain corresponds to 114-115; it reads PD. The chain crosses the membrane as a helical span at residues 116-136; it reads IGLLGIFGATIAAGFITTLLA. Over 137-142 the chain is Cytoplasmic; it reads PLIGRL. A helical transmembrane segment spans residues 143-163; that stretch reads MPLFPPLVTGVVITSIGLSII. Over 164-178 the chain is Periplasmic; it reads QVGIDWAAGGKGNPQ. The helical transmembrane segment at 179 to 199 threads the bilayer; it reads YGNPVYLGISFAVLIFILLIT. The Cytoplasmic portion of the chain corresponds to 200–204; it reads RYAKG. Residues 205-225 form a helical membrane-spanning segment; the sequence is FMSNVAVLLGIVFGFLLSWMM. Residues 226 to 261 lie on the Periplasmic side of the membrane; the sequence is NEVNLSGLHDASWFAIVTPMSFGMPIFDPVSILTMT. The helical transmembrane segment at 262–282 threads the bilayer; the sequence is AVLIIVFIESMGMFLALGEIV. Topologically, residues 283 to 337 are cytoplasmic; sequence GRKLSSHDIIRGLRVDGVGTMIGGTFNSFPHTSFSQNVGLVSVTRVHSRWVCISS. The helical transmembrane segment at 338–358 threads the bilayer; the sequence is GIILILFGMVPKMAVLVASIP. A topological domain (periplasmic) is located at residue glutamine 359. Residues 360–380 form a helical membrane-spanning segment; sequence FVLGGAGLVMFGMVLATGIRI. Topologically, residues 381–392 are cytoplasmic; that stretch reads LSRCNYTTNRYN. Residues 393–413 form a helical membrane-spanning segment; that stretch reads LYIVAISLGVGMTPTLSHDFF. The Periplasmic segment spans residues 414–421; the sequence is SKLPAVLQ. A helical transmembrane segment spans residues 422-442; the sequence is PLLHSGIMLATLSAVVLNVFF. Residues 443–482 lie on the Cytoplasmic side of the membrane; sequence NGYQHHADLVKESVSDKDLKVRTVRMWLLMRKLKKNEHGE.

It belongs to the nucleobase:cation symporter-2 (NCS2) (TC 2.A.40) family.

The protein resides in the cell inner membrane. Its activity is regulated as follows. Inhibited in the presence of the protonophore carbonyl cyanide m-chlorophenyl hydrazone. Functionally, proton-dependent high-capacity transporter for uric acid. Also shows a low capacity for transport of xanthine at 37 degrees Celsius but not at 25 degrees Celsius. This is Uric acid transporter UacT (uacT) from Escherichia coli (strain K12).